The chain runs to 1347 residues: MSQEYTEDKEVTLTKLSSGRRLLEALLILIVLFAVWLMAALLSFNPSDPSWSQTAWHEPIHNLGGMPGAWLADTLFFIFGVMAYTIPVIIVGGCWFAWRHQSSDEYIDYFAVSLRIIGVLALILTSCGLAAINADDIWYFASGGVIGSLLSTTLQPLLHSSGGTIALLCVWAAGLTLFTGWSWVTIAEKLGGWILNILTFASNRTRRDDTWVDEDEYEDDEEYEDENHGKQHESRRARILRGALARRKRLAEKFINPMGRQTDAALFSGKRMDDEEEITYTARGVAADPDDVLFSGNRATQPEYDEYDPLLNGAPITEPVAVAAAATTATQSWAAPVEPVTQTPPVASVDVPPTQPTVAWQPVPGPQTGEPVIAPAPEGYPHQSQYAQPAVQYNEPLQQPVQPQQPYYAPAAEQPVQQPYYAPAAEQPVQQPYYAPAPEQPVAGNAWQAEEQQSTFAPQSTYQTEQTYQQPAAQEPLYQQPQPVEQQPVVEPEPVVEETKPTRPPLYYFEEVEEKRAREREQLAAWYQPIPEPVKEPEPIKSSLKAPSVAAVPPVEAAAAVSPLASGVKKATLATGAAATVAAPVFSLANSGGPRPQVKEGIGPQLPRPKRIRVPTRRELASYGIKLPSQRAAEEKAREAQRNQYDSGDQYNDDEIDAMQQDELARQFAQTQQQRYGEQYQHDVPVNTEDADAAAEAELARQFAQTQQQRYSGEQPAGANPFSLDDFEFSPMKALLDDGPHEPLFTPIVEPVQQPQQPVAPQQQYQQPQQPVAPQPQYQQPQQPVAPQPQYQQPQYQQPQQPVAPQQQYQQPQQPVTQQPQYQQPQQPVVPQPQDTLLHPLLMRNGDSRPLHKPTTPLPSLDLLTPPPSEVEPVDTFALEQMARLVEARLADFRIKADVVNYSPGPVITRFELNLAPGVKAARISNLSRDLARSLSTVAVRVVEVIPGKPYVGLELPNKKRQTVYLREVLDNAKFRDNPSPLTVVLGKDIAGEPVVADLAKMPHLLVAGTTGSGKSVGVNAMILSMLYKAQPEDVRFIMIDPKMLELSVYEGIPHLLTEVVTDMKDAANALRWCVNEMERRYKLMSALGVRNLAGYNEKIAEADRMMRPIPDPYWKPGDSMDAQHPVLKKEPYIVVLVDEFADLMMTVGKKVEELIARLAQKARAAGIHLVLATQRPSVDVITGLIKANIPTRIAFTVSSKIDSRTILDQAGAESLLGMGDMLYSGPNSTLPVRVHGAFVRDQEVHAVVQDWKARGRPQYVDGITSDSESEGGVGGFDGAEELDPLFDQAVQFVTEKRKASISGVQRQFRIGYNRAARIIEQMEAQGIVSEQGHNGNREVLAPPPFD.

Topologically, residues 1 to 24 (MSQEYTEDKEVTLTKLSSGRRLLE) are cytoplasmic. Residues 25 to 44 (ALLILIVLFAVWLMAALLSF) traverse the membrane as a helical segment. Topologically, residues 45–74 (NPSDPSWSQTAWHEPIHNLGGMPGAWLADT) are periplasmic. Residues 75–98 (LFFIFGVMAYTIPVIIVGGCWFAW) traverse the membrane as a helical segment. The Cytoplasmic segment spans residues 99–115 (RHQSSDEYIDYFAVSLR). A helical membrane pass occupies residues 116-132 (IIGVLALILTSCGLAAI). At 133–162 (NADDIWYFASGGVIGSLLSTTLQPLLHSSG) the chain is on the periplasmic side. Residues 163–179 (GTIALLCVWAAGLTLFT) traverse the membrane as a helical segment. The Cytoplasmic portion of the chain corresponds to 180–1347 (GWSWVTIAEK…REVLAPPPFD (1168 aa)). Disordered regions lie at residues 354–384 (TQPT…PHQS), 434–502 (YAPA…TKPT), 589–725 (ANSG…FSLD), and 754–867 (QPQQ…LTPP). The segment covering 434-443 (YAPAPEQPVA) has biased composition (low complexity). The segment covering 450–461 (EEQQSTFAPQST) has biased composition (polar residues). Positions 462–493 (YQTEQTYQQPAAQEPLYQQPQPVEQQPVVEPE) are enriched in low complexity. Residues 632–641 (AAEEKAREAQ) are compositionally biased toward basic and acidic residues. Positions 670-679 (QTQQQRYGEQ) are enriched in low complexity. The span at 703-712 (FAQTQQQRYS) shows a compositional bias: polar residues. Composition is skewed to low complexity over residues 754–834 (QPQQ…PQPQ) and 854–864 (PTTPLPSLDLL). The region spanning 992–1205 (GEPVVADLAK…FTVSSKIDSR (214 aa)) is the FtsK domain. An ATP-binding site is contributed by 1012–1017 (GSGKSV).

This sequence belongs to the FtsK/SpoIIIE/SftA family. In terms of assembly, homohexamer. Forms a ring that surrounds DNA.

It localises to the cell inner membrane. Essential cell division protein that coordinates cell division and chromosome segregation. The N-terminus is involved in assembly of the cell-division machinery. The C-terminus functions as a DNA motor that moves dsDNA in an ATP-dependent manner towards the dif recombination site, which is located within the replication terminus region. Translocation stops specifically at Xer-dif sites, where FtsK interacts with the Xer recombinase, allowing activation of chromosome unlinking by recombination. FtsK orienting polar sequences (KOPS) guide the direction of DNA translocation. FtsK can remove proteins from DNA as it translocates, but translocation stops specifically at XerCD-dif site, thereby preventing removal of XerC and XerD from dif. The protein is DNA translocase FtsK (ftsK) of Escherichia coli O6:H1 (strain CFT073 / ATCC 700928 / UPEC).